We begin with the raw amino-acid sequence, 147 residues long: Hemoglobin subunit gamma (147 aa).

A Globin domain is found at His-3–His-147. Residues His-64 and His-93 each coordinate heme b.

This sequence belongs to the globin family. As to quaternary structure, heterotetramer of two alpha chains and two gamma chains. Red blood cells.

In terms of biological role, this protein functions as an embryonic globin, but the gene structure and chromosomal location resemble more closely the human gamma chain gene, which codes for a fetal globin. This chain is Hemoglobin subunit gamma (HBG), found in Oryctolagus cuniculus (Rabbit).